Consider the following 400-residue polypeptide: NADPH dehydrogenase 3 (400 aa).

Positions 38 and 115 each coordinate FMN. Substrate-binding residues include H192 and N195. Residue Y197 is the Proton donor of the active site. R244 and R349 together coordinate FMN. Y376 lines the substrate pocket.

As to quaternary structure, homodimer or heterodimer with OYE2. Requires FMN as cofactor.

The catalysed reaction is A + NADPH + H(+) = AH2 + NADP(+). In terms of biological role, flavin-dependent enoate reductase that catalyzes the chemo- and stereoslective hydrogenation of electron-poor alkenes. The enzyme is reduced by NADPH, and oxygen, quinones, and alpha,beta-unsaturated aldehydes and ketones can act as electron acceptors to complete catalytic turnover. The physiological oxidant remains elusive. Has a prooxidant activity, increasing reactive oxygen species (ROS) levels when overexpressed. Formation of OYE2-OYE3 heterodimers contribute to the induction of programmed cell death upon oxidative stress. The protein is NADPH dehydrogenase 3 of Saccharomyces cerevisiae (strain ATCC 204508 / S288c) (Baker's yeast).